We begin with the raw amino-acid sequence, 113 residues long: Hydrogenase maturation factor HypA (113 aa).

H2 serves as a coordination point for Ni(2+). 4 residues coordinate Zn(2+): C70, C73, C86, and C88.

It belongs to the HypA/HybF family.

In terms of biological role, involved in the maturation of [NiFe] hydrogenases. Required for nickel insertion into the metal center of the hydrogenase. The protein is Hydrogenase maturation factor HypA of Nostoc sp. (strain PCC 7120 / SAG 25.82 / UTEX 2576).